The sequence spans 418 residues: Gamma-glutamyl phosphate reductase (418 aa).

The protein belongs to the gamma-glutamyl phosphate reductase family.

The protein resides in the cytoplasm. It carries out the reaction L-glutamate 5-semialdehyde + phosphate + NADP(+) = L-glutamyl 5-phosphate + NADPH + H(+). It participates in amino-acid biosynthesis; L-proline biosynthesis; L-glutamate 5-semialdehyde from L-glutamate: step 2/2. Its function is as follows. Catalyzes the NADPH-dependent reduction of L-glutamate 5-phosphate into L-glutamate 5-semialdehyde and phosphate. The product spontaneously undergoes cyclization to form 1-pyrroline-5-carboxylate. The polypeptide is Gamma-glutamyl phosphate reductase (Aliivibrio fischeri (strain MJ11) (Vibrio fischeri)).